The chain runs to 984 residues: Mediator of RNA polymerase II transcription subunit 5 (984 aa).

Belongs to the Mediator complex subunit 5 family. In terms of assembly, component of the Mediator complex.

Its subcellular location is the nucleus. Component of the Mediator complex, a coactivator involved in the regulated transcription of nearly all RNA polymerase II-dependent genes. Mediator functions as a bridge to convey information from gene-specific regulatory proteins to the basal RNA polymerase II transcription machinery. Mediator is recruited to promoters by direct interactions with regulatory proteins and serves as a scaffold for the assembly of a functional preinitiation complex with RNA polymerase II and the general transcription factors. The polypeptide is Mediator of RNA polymerase II transcription subunit 5 (NUT1) (Phaeosphaeria nodorum (strain SN15 / ATCC MYA-4574 / FGSC 10173) (Glume blotch fungus)).